We begin with the raw amino-acid sequence, 509 residues long: Tyrosine-protein phosphatase non-receptor type substrate 1 (509 aa).

A signal peptide spans 1–31 (MEPAGPAPGRLGPLLFCLLLSASCFCAGASG). Residues 32–138 (KELKVTQADK…IVEPDTEIKS (107 aa)) form the Ig-like V-type domain. The Extracellular portion of the chain corresponds to 32–373 (KELKVTQADK…PDNNAYYNWN (342 aa)). Residues Asn-54, Asn-93, Asn-169, Asn-181, Asn-205, Asn-209, Asn-242, Asn-246, Asn-271, Asn-293, Asn-312, Asn-320, and Asn-345 are each glycosylated (N-linked (GlcNAc...) asparagine). An intrachain disulfide couples Cys-55 to Cys-122. 2 Ig-like C1-type domains span residues 150-248 (PSSP…ANFS) and 255-349 (PTLK…HTVR). Cys-172 and Cys-229 form a disulfide bridge. A disulfide bond links Cys-274 and Cys-332. Residues 374 to 394 (VFIGVGVACALLVVLLMAALY) traverse the membrane as a helical segment. Residues 395-509 (LLRIKQKKAK…EYASVQVQRK (115 aa)) are Cytoplasmic-facing. Tyr-436 carries the post-translational modification Phosphotyrosine; by Tyr-kinases. The short motif at 436–439 (YADL) is the SH2-binding element. Residues 441-472 (LPKEKKPAPRVPEPNNHTEYASIETGKLPRPE) form a disordered region. An SH3-binding motif is present at residues 446–451 (KPAPRV). A phosphotyrosine; by Tyr-kinases mark is found at Tyr-460, Tyr-477, and Tyr-501. Short sequence motifs (SH2-binding) lie at residues 460–463 (YASI), 477–480 (YADL), and 501–504 (YASV). Positions 485–509 (LNRAQPTPKPEPSFSEYASVQVQRK) are disordered. Polar residues predominate over residues 500–509 (EYASVQVQRK).

Binds PTPN11 when tyrosine-phosphorylated, except in macrophages, where it primarily binds PTPN6. Binds GRB2 in vitro. Binds FGR. Binds JAK2 irrespective of its phosphorylation status and forms a stable complex. Binds SCAP1 and/or SCAP2. The resulting complex recruits FYB1. Binds PTK2B. Interacts with TRIM2. In terms of processing, N-glycosylated. Phosphorylated on tyrosine residues in response to insulin, cell adhesion or epidermal growth factors. Dephosphorylated by PTPN11. In terms of tissue distribution, highly expressed in brain, spleen, lung, liver and kidney. Detected at lower levels in heart. Highly expressed in alveolar and peritoneal macrophages, and at lower levels in dendritic cells.

It localises to the membrane. Functionally, immunoglobulin-like cell surface receptor for CD47. Acts as docking protein and induces translocation of PTPN6, PTPN11 and other binding partners from the cytosol to the plasma membrane. Supports adhesion of cerebellar neurons, neurite outgrowth and glial cell attachment. May play a key role in intracellular signaling during synaptogenesis and in synaptic function. Involved in the negative regulation of receptor tyrosine kinase-coupled cellular responses induced by cell adhesion, growth factors or insulin. Mediates negative regulation of phagocytosis, mast cell activation and dendritic cell activation. CD47 binding prevents maturation of immature dendritic cells and inhibits cytokine production by mature dendritic cells. Plays a role in antiviral immunity and limits new world arenavirus infection by decreasing virus internalization. Receptor for THBS1. Interaction with THBS1 stimulates phosphorylation of SIRPA. In response to THBS1, involved in ROS signaling in non-phagocytic cells, stimulating NADPH oxidase-derived ROS production. The polypeptide is Tyrosine-protein phosphatase non-receptor type substrate 1 (Sirpa) (Rattus norvegicus (Rat)).